The sequence spans 423 residues: UDP-N-acetylglucosamine 1-carboxyvinyltransferase 2 (423 aa).

23–24 contacts phosphoenolpyruvate; sequence KN. UDP-N-acetyl-alpha-D-glucosamine is bound at residue arginine 93. Cysteine 117 (proton donor) is an active-site residue. 2-(S-cysteinyl)pyruvic acid O-phosphothioketal is present on cysteine 117. Residues 122 to 126, aspartate 305, and isoleucine 327 contribute to the UDP-N-acetyl-alpha-D-glucosamine site; that span reads RPIDQ.

The protein belongs to the EPSP synthase family. MurA subfamily.

The protein resides in the cytoplasm. It carries out the reaction phosphoenolpyruvate + UDP-N-acetyl-alpha-D-glucosamine = UDP-N-acetyl-3-O-(1-carboxyvinyl)-alpha-D-glucosamine + phosphate. It participates in cell wall biogenesis; peptidoglycan biosynthesis. Functionally, cell wall formation. Adds enolpyruvyl to UDP-N-acetylglucosamine. The polypeptide is UDP-N-acetylglucosamine 1-carboxyvinyltransferase 2 (Listeria monocytogenes serotype 4b (strain F2365)).